Consider the following 384-residue polypeptide: Cysteine protease ATG4B (384 aa).

C74 (nucleophile) is an active-site residue. Residues D269 and H271 contribute to the active site. Residues 379–382 carry the LIR motif; that stretch reads FEIL.

The protein belongs to the peptidase C54 family.

Its subcellular location is the cytoplasm. It localises to the cytosol. It is found in the cytoplasmic vesicle. The protein localises to the autophagosome. The protein resides in the endoplasmic reticulum. Its subcellular location is the mitochondrion. The enzyme catalyses [protein]-C-terminal L-amino acid-glycyl-phosphatidylethanolamide + H2O = [protein]-C-terminal L-amino acid-glycine + a 1,2-diacyl-sn-glycero-3-phosphoethanolamine. It catalyses the reaction [protein]-C-terminal L-amino acid-glycyl-phosphatidylserine + H2O = [protein]-C-terminal L-amino acid-glycine + a 1,2-diacyl-sn-glycero-3-phospho-L-serine. Its function is as follows. Cysteine protease that plays a key role in autophagy by mediating both proteolytic activation and delipidation of ATG8 family proteins. Required for canonical autophagy (macroautophagy), non-canonical autophagy as well as for mitophagy. The protease activity is required for proteolytic activation of ATG8 family proteins: cleaves the C-terminal amino acid of ATG8 proteins to reveal a C-terminal glycine. Exposure of the glycine at the C-terminus is essential for ATG8 proteins conjugation to phosphatidylethanolamine (PE) and insertion to membranes, which is necessary for autophagy. Protease activity is also required to counteract formation of high-molecular weight conjugates of ATG8 proteins (ATG8ylation): acts as a deubiquitinating-like enzyme that removes ATG8 conjugated to other proteins, such as ATG3. In addition to the protease activity, also mediates delipidation of ATG8 family proteins. Catalyzes delipidation of PE-conjugated forms of ATG8 proteins during macroautophagy. Also involved in non-canonical autophagy, a parallel pathway involving conjugation of ATG8 proteins to single membranes at endolysosomal compartments, by catalyzing delipidation of ATG8 proteins conjugated to phosphatidylserine (PS). This Xenopus laevis (African clawed frog) protein is Cysteine protease ATG4B.